The chain runs to 398 residues: Argininosuccinate synthase (398 aa).

8–16 (AYSGGLDTT) is a binding site for ATP. Tyr-87 contacts L-citrulline. ATP is bound at residue Gly-117. 3 residues coordinate L-aspartate: Thr-119, Asn-123, and Asp-124. Asn-123 lines the L-citrulline pocket. The L-citrulline site is built by Arg-127, Ser-175, Glu-259, and Tyr-271.

This sequence belongs to the argininosuccinate synthase family. Type 1 subfamily. In terms of assembly, homotetramer.

Its subcellular location is the cytoplasm. The enzyme catalyses L-citrulline + L-aspartate + ATP = 2-(N(omega)-L-arginino)succinate + AMP + diphosphate + H(+). It functions in the pathway amino-acid biosynthesis; L-arginine biosynthesis; L-arginine from L-ornithine and carbamoyl phosphate: step 2/3. The protein is Argininosuccinate synthase of Corynebacterium jeikeium (strain K411).